A 686-amino-acid chain; its full sequence is Amyloid-beta-like protein (686 aa).

Positions 1 to 21 (MTVGKLMIGLLIPILVATVYA) are cleaved as a signal peptide. The Extracellular segment spans residues 22 to 621 (EGSPAGSKRH…VERSASSVFQ (600 aa)). Residues 32–125 (EKFIPMVAFS…PYHCIDGEFH (94 aa)) form a GFLD subdomain region. One can recognise an E1 domain in the interval 32–197 (EKFIPMVAFS…TGVEFVCCPN (166 aa)). 6 cysteine pairs are disulfide-bonded: cysteine 42–cysteine 65, cysteine 76–cysteine 119, cysteine 101–cysteine 108, cysteine 135–cysteine 195, cysteine 146–cysteine 182, and cysteine 160–cysteine 194. Asparagine 84 carries an N-linked (GlcNAc...) asparagine glycan. The segment at 133-197 (HDCQFSHVNS…TGVEFVCCPN (65 aa)) is cuBD subdomain. Asparagine 201 is a glycosylation site (N-linked (GlcNAc...) asparagine). The interval 201 to 245 (NKTDVQKTKEDEDDDDDEDDAYEDDYSEESDEKDEEEPSSQDPYF) is disordered. The span at 211–239 (DEDDDDDEDDAYEDDYSEESDEKDEEEPS) shows a compositional bias: acidic residues. The region spanning 240-440 (SQDPYFKIAN…KYVRPIAVTY (201 aa)) is the E2 domain. Asparagine 249 carries N-linked (GlcNAc...) asparagine glycosylation. Heparin-binding positions include 252–255 (NEHD) and histidine 382. A glycan (N-linked (GlcNAc...) asparagine) is linked at asparagine 417. Disordered stretches follow at residues 479-526 (PTTT…DMKK) and 550-585 (KLVETSVQTDDEDDDEDSSSSTSSESDEDEDKNIKE). The span at 500–516 (SDSEEEADEYYEDEDDE) shows a compositional bias: acidic residues. Residues 517–526 (QVKKTPDMKK) are compositionally biased toward basic and acidic residues. Residues 558–567 (TDDEDDDEDS) show a composition bias toward acidic residues. The chain crosses the membrane as a helical span at residues 622 to 642 (PYVLASAMFITAICIIAFAIT). Residues 643 to 686 (NARRRRAMRGFIEVDVYTPEERHVAGMQVNGYENPTYSFFDSKA) lie on the Cytoplasmic side of the membrane. Residues 674-679 (YENPTY) carry the YENPXY motif motif.

Belongs to the APP family. As to quaternary structure, interacts (via cytoplasmic domain) with feh-1 (via PID 2 domain). In terms of processing, extracellular region is proteolytically cleaved. In terms of tissue distribution, expressed in the head, pharynx, spermatheca, uterus, vulva, tail and ventral neurons. Specifically expressed in nerve ring interneurons, the ventral cord, socket and amphids in the head, with strong expression in junctional cells, including the pharyngeal intestinal valve and uterine seam junction, and the excretory cell and weak expression in epidermal epithelial cells, including hyp7 cells, vulval cells, rectal valve cells, pharyngeal arcade cells and the tail hypodermis.

The protein localises to the membrane. The protein resides in the early endosome. Functionally, required for normal developmental progression throughout all life stages. Specifically required for the molt stage during all larval transitions and morphogenesis. Acts with heterochronic genes, including members of the let-7 family, to regulate larval stage to adult transition. Acts synergistically with acn-1 in let-7 regulated postembryonic cell division of hypodermal seam cells. Acts in multiple pathways to influence daf-12 and daf-16 activity to in turn regulate physiological and reproductive processes such as body size and egg-laying. May play a role in neurotransmission. The protein is Amyloid-beta-like protein of Caenorhabditis elegans.